A 465-amino-acid polypeptide reads, in one-letter code: Indoleacetamide hydrolase (465 aa).

Residues methionine 1–arginine 40 form a disordered region. Residues arginine 9 to cysteine 39 are compositionally biased toward basic and acidic residues. Serine 149 acts as the Charge relay system in catalysis. The active-site Acyl-ester intermediate is the serine 173.

This sequence belongs to the amidase family.

Its pathway is plant hormone metabolism; auxin biosynthesis. In terms of biological role, hydrolyzes indole-3-acetamide (IAM) into indole-3-acetic acid (IAA). The sequence is that of Indoleacetamide hydrolase (bam) from Bradyrhizobium japonicum.